Here is a 522-residue protein sequence, read N- to C-terminus: 2-isopropylmalate synthase (522 aa).

In terms of domain architecture, Pyruvate carboxyltransferase spans V5 to H267. Mn(2+) contacts are provided by D14, H202, H204, and N238. The regulatory domain stretch occupies residues Q392 to V522.

Belongs to the alpha-IPM synthase/homocitrate synthase family. LeuA type 1 subfamily. As to quaternary structure, homodimer. Mn(2+) is required as a cofactor.

Its subcellular location is the cytoplasm. The enzyme catalyses 3-methyl-2-oxobutanoate + acetyl-CoA + H2O = (2S)-2-isopropylmalate + CoA + H(+). It functions in the pathway amino-acid biosynthesis; L-leucine biosynthesis; L-leucine from 3-methyl-2-oxobutanoate: step 1/4. In terms of biological role, catalyzes the condensation of the acetyl group of acetyl-CoA with 3-methyl-2-oxobutanoate (2-ketoisovalerate) to form 3-carboxy-3-hydroxy-4-methylpentanoate (2-isopropylmalate). In Shewanella baltica (strain OS195), this protein is 2-isopropylmalate synthase.